Here is a 367-residue protein sequence, read N- to C-terminus: S-adenosylmethionine:tRNA ribosyltransferase-isomerase (367 aa).

The segment at 150–182 is disordered; the sequence is RHGEEEESSDEAISSQNPEIATESKRTPSNDDK. Over residues 171–182 the composition is skewed to basic and acidic residues; that stretch reads TESKRTPSNDDK.

This sequence belongs to the QueA family. Monomer.

The protein resides in the cytoplasm. The catalysed reaction is 7-aminomethyl-7-carbaguanosine(34) in tRNA + S-adenosyl-L-methionine = epoxyqueuosine(34) in tRNA + adenine + L-methionine + 2 H(+). It functions in the pathway tRNA modification; tRNA-queuosine biosynthesis. Functionally, transfers and isomerizes the ribose moiety from AdoMet to the 7-aminomethyl group of 7-deazaguanine (preQ1-tRNA) to give epoxyqueuosine (oQ-tRNA). In Rickettsia felis (strain ATCC VR-1525 / URRWXCal2) (Rickettsia azadi), this protein is S-adenosylmethionine:tRNA ribosyltransferase-isomerase.